The primary structure comprises 102 residues: MASSDRFPLFCCVRNCIFRVSVDRVQPFIAHLRDHFGEKPGTSIRFRCPRCETILWRFPLGETVPDEMNIRRAWNHVALIQNECRSPETQIMCIHFLVDPES.

This is an uncharacterized protein from Ictaluridae (bullhead catfishes).